Here is a 471-residue protein sequence, read N- to C-terminus: Probable anion transporter 5, chloroplastic (471 aa).

The transit peptide at 1–59 (MAASASASALQAERCLLVGVGAGPRRHRLPLRMPPPLHAPPALLLLPHRRRRRWPPAVR) directs the protein to the chloroplast. The interval 56-76 (PAVRASPGEGGGGGGGGGGGG) is disordered. Helical transmembrane passes span 62–82 (PGEGGGGGGGGGGGGGLAGAL), 103–123 (IGVVAWSLATAIIPAVAGFMP), 162–182 (VVFGGLSFGSVLGLLFAPPII), and 185–205 (LGWESVFYIFGLLGIIWCLGF). Over residues 63–76 (GEGGGGGGGGGGGG) the composition is skewed to gly residues. The interval 226–247 (GQSPSGSSDLISSSVSPKSSES) is disordered. Low complexity predominate over residues 228-247 (SPSGSSDLISSSVSPKSSES). The next 6 membrane-spanning stretches (helical) occupy residues 270-290 (VWAMIYAHFCGSWGHYTCLSW), 307-327 (AWVSVLPPLGSMIITSIAAPF), 348-368 (IAFLSPATFMMLSSVDLGVPP), 371-391 (IVAFLTSGLALSSFALSGLYC), 403-423 (ILLGITNTVGAVPGIVGVALT), and 435-455 (ISLFAPSIFFYLTGTAVWLAF).

Belongs to the major facilitator superfamily. Sodium/anion cotransporter (TC 2.A.1.14) family.

The protein resides in the plastid. The protein localises to the chloroplast membrane. Probable anion transporter. This Oryza sativa subsp. japonica (Rice) protein is Probable anion transporter 5, chloroplastic (PHT4;5).